The chain runs to 364 residues: GDSL esterase/lipase EXL3 (364 aa).

The signal sequence occupies residues 1–32 (MKDNSSWSCSCSWSSWKICLLSVLFLTETITA). The Nucleophile role is filled by Ser50. Residues Asp339 and His342 contribute to the active site.

It belongs to the 'GDSL' lipolytic enzyme family. As to expression, flower buds.

The protein resides in the secreted. This Arabidopsis thaliana (Mouse-ear cress) protein is GDSL esterase/lipase EXL3 (EXL3).